We begin with the raw amino-acid sequence, 404 residues long: Corticosteroid-binding globulin (404 aa).

Positions 1-22 (MLPTLYTCLLWLSTSGLWTVQA) are cleaved as a signal peptide. N-linked (GlcNAc...) asparagine glycosylation is found at Asn95, Asn119, and Asn175. Gln253 provides a ligand contact to cortisol. Residue Asn259 is glycosylated (N-linked (GlcNAc...) asparagine). Gln285 is a binding site for cortisol. Asn326 carries N-linked (GlcNAc...) asparagine glycosylation. Residue Trp392 coordinates cortisol.

Belongs to the serpin family. In terms of processing, glycosylation in position Asn-259 is needed for steroid binding.

It is found in the secreted. Its function is as follows. Major transport protein for glucocorticoids and progestins in the blood of almost all vertebrate species. This chain is Corticosteroid-binding globulin (SERPINA6), found in Bos taurus (Bovine).